A 94-amino-acid chain; its full sequence is MSEKTVTETNTDRGFRKTREGLVVSDKMDKTVVVAVEDRVKHALYGKVIRRTNKLKAHDEQNSAGVGDRVLIMETRPLSASKRWRIVEILEKAK.

The protein belongs to the universal ribosomal protein uS17 family. Part of the 30S ribosomal subunit.

In terms of biological role, one of the primary rRNA binding proteins, it binds specifically to the 5'-end of 16S ribosomal RNA. The polypeptide is Small ribosomal subunit protein uS17 (Streptomyces griseus subsp. griseus (strain JCM 4626 / CBS 651.72 / NBRC 13350 / KCC S-0626 / ISP 5235)).